The chain runs to 200 residues: MKTVLAIFSSLNGTEGNSSKLANEYLLKIENDDSVRINRVDVASLALPHLTGEEMQAWMTDASERNESQHALAKISDNIVEAVKAADEIVLAVPMYNFGIPSSLKAYFDRIARAGITFKYTETGPVGLLENKSATVFAARGGVYAGSDFDTQTPYLKHFLNFIGISDVNFVYAEGLNMGEEQANSAFADANEKIIELTKG.

Residues Ser10 and 95 to 98 each bind FMN; that span reads MYNF.

It belongs to the azoreductase type 1 family. Homodimer. FMN serves as cofactor.

The catalysed reaction is 2 a quinone + NADH + H(+) = 2 a 1,4-benzosemiquinone + NAD(+). It carries out the reaction N,N-dimethyl-1,4-phenylenediamine + anthranilate + 2 NAD(+) = 2-(4-dimethylaminophenyl)diazenylbenzoate + 2 NADH + 2 H(+). Functionally, quinone reductase that provides resistance to thiol-specific stress caused by electrophilic quinones. In terms of biological role, also exhibits azoreductase activity. Catalyzes the reductive cleavage of the azo bond in aromatic azo compounds to the corresponding amines. This chain is FMN-dependent NADH:quinone oxidoreductase, found in Alteromonas mediterranea (strain DSM 17117 / CIP 110805 / LMG 28347 / Deep ecotype).